The following is a 497-amino-acid chain: Glycerol kinase (497 aa).

Residue Thr12 coordinates ADP. ATP contacts are provided by Thr12, Thr13, and Ser14. Position 12 (Thr12) interacts with sn-glycerol 3-phosphate. Arg16 is an ADP binding site. Sn-glycerol 3-phosphate is bound by residues Arg82, Glu83, Tyr134, and Asp243. The glycerol site is built by Arg82, Glu83, Tyr134, Asp243, and Gln244. Residues Thr265 and Gly308 each contribute to the ADP site. Residues Thr265, Gly308, Gln312, and Gly409 each contribute to the ATP site. The ADP site is built by Gly409 and Asn413.

Belongs to the FGGY kinase family. In terms of assembly, homotetramer and homodimer (in equilibrium).

The enzyme catalyses glycerol + ATP = sn-glycerol 3-phosphate + ADP + H(+). It functions in the pathway polyol metabolism; glycerol degradation via glycerol kinase pathway; sn-glycerol 3-phosphate from glycerol: step 1/1. With respect to regulation, activated by phosphorylation and inhibited by fructose 1,6-bisphosphate (FBP). Key enzyme in the regulation of glycerol uptake and metabolism. Catalyzes the phosphorylation of glycerol to yield sn-glycerol 3-phosphate. The chain is Glycerol kinase from Thermoanaerobacter pseudethanolicus (strain ATCC 33223 / 39E) (Clostridium thermohydrosulfuricum).